The following is a 309-amino-acid chain: Ribonuclease Z (309 aa).

Zn(2+) contacts are provided by His-63, His-65, Asp-67, His-68, His-141, Asp-208, and His-266. The active-site Proton acceptor is Asp-67.

Belongs to the RNase Z family. In terms of assembly, homodimer. Requires Zn(2+) as cofactor.

The catalysed reaction is Endonucleolytic cleavage of RNA, removing extra 3' nucleotides from tRNA precursor, generating 3' termini of tRNAs. A 3'-hydroxy group is left at the tRNA terminus and a 5'-phosphoryl group is left at the trailer molecule.. Functionally, zinc phosphodiesterase, which displays some tRNA 3'-processing endonuclease activity. Probably involved in tRNA maturation, by removing a 3'-trailer from precursor tRNA. The polypeptide is Ribonuclease Z (Salinispora arenicola (strain CNS-205)).